Consider the following 166-residue polypeptide: MANNDQKRDEGYIEKLVQVNRVAKTVKGGRIFTFTALTVVGDGKGRVGFGRGKSREVPAAIQKAMEAARRNMIQVDLNGTTLQYPIKSAHGASKVYMQPASEGTGIIAGGAMRAVLEVAGVQNVLAKCYGSTNPVNVVHATFKGLKTMQSPESVAAKRGKSVEEIL.

The S5 DRBM domain occupies 12 to 75 (YIEKLVQVNR…EAARRNMIQV (64 aa)).

The protein belongs to the universal ribosomal protein uS5 family. Part of the 30S ribosomal subunit. Contacts proteins S4 and S8.

Functionally, with S4 and S12 plays an important role in translational accuracy. Its function is as follows. Located at the back of the 30S subunit body where it stabilizes the conformation of the head with respect to the body. The protein is Small ribosomal subunit protein uS5 of Ectopseudomonas mendocina (strain ymp) (Pseudomonas mendocina).